The chain runs to 209 residues: Protein phosphotransferase ChpT (209 aa).

Histidine 22 is subject to Phosphohistidine.

The protein belongs to the ChpT phosphotransferase family. In terms of assembly, homodimer. Forms an asymmetric heterotetramer with CtrA (2:2). There are at least two modes of interaction between ChpT and CtrA, only one of which is competent to catalyze His-Asp phosphoryl transfer. Post-translationally, is phosphorylated by CckA-P on His-22.

It is found in the cytoplasm. In terms of biological role, component of a regulatory phosphorelay system that controls B.abortus cell growth, division, and intracellular survival inside mammalian host cells. This signaling pathway is composed of CckA, ChpT, CtrA and CpdR. ChpT efficiently and specifically shuttles phosphoryl groups from the CckA kinase to the receiver domains of both CtrA and CpdR. Does not bind ATP. Overexpression of chpT results in a defect in cell morphology, DNA content, and intracellular survival in human macrophages. This is Protein phosphotransferase ChpT from Brucella abortus (strain 2308).